A 118-amino-acid chain; its full sequence is Large ribosomal subunit protein bL19 (118 aa).

The protein belongs to the bacterial ribosomal protein bL19 family.

Its function is as follows. This protein is located at the 30S-50S ribosomal subunit interface and may play a role in the structure and function of the aminoacyl-tRNA binding site. This chain is Large ribosomal subunit protein bL19, found in Geotalea daltonii (strain DSM 22248 / JCM 15807 / FRC-32) (Geobacter daltonii).